A 476-amino-acid polypeptide reads, in one-letter code: Probable periplasmic serine endoprotease DegP-like (476 aa).

Positions 1–27 (MSIPRLKSYFTILATVLVLGQAVSAQA) are cleaved as a signal peptide. Catalysis depends on charge relay system residues His-116, Asp-146, and Ser-219. Residues 217 to 219 (GNS) and 274 to 278 (LGVVI) each bind substrate. 2 PDZ domains span residues 263–354 (LKTG…IRDG) and 360–465 (ELTV…LRQG).

This sequence belongs to the peptidase S1C family.

Its subcellular location is the periplasm. The enzyme catalyses Acts on substrates that are at least partially unfolded. The cleavage site P1 residue is normally between a pair of hydrophobic residues, such as Val-|-Val.. In terms of biological role, might be efficient in the degradation of transiently denatured and unfolded proteins which accumulate in the periplasm following stress conditions. This is Probable periplasmic serine endoprotease DegP-like (mucD) from Pseudomonas fluorescens (strain ATCC BAA-477 / NRRL B-23932 / Pf-5).